A 350-amino-acid chain; its full sequence is NADH-quinone oxidoreductase subunit H (350 aa).

Helical transmembrane passes span 31–51 (LMLL…LFLI), 102–122 (LLAP…IPFG), 132–152 (LGVL…WMAG), 171–191 (MLSY…MAGS), 205–225 (WFIF…NAEF), 263–283 (FMIG…APFG), 286–306 (FIPS…LYMW), and 322–342 (FAWK…GFGL).

The protein belongs to the complex I subunit 1 family. As to quaternary structure, NDH-1 is composed of 14 different subunits. Subunits NuoA, H, J, K, L, M, N constitute the membrane sector of the complex.

It localises to the cell membrane. The catalysed reaction is a quinone + NADH + 5 H(+)(in) = a quinol + NAD(+) + 4 H(+)(out). In terms of biological role, NDH-1 shuttles electrons from NADH, via FMN and iron-sulfur (Fe-S) centers, to quinones in the respiratory chain. The immediate electron acceptor for the enzyme in this species is believed to be ubiquinone. Couples the redox reaction to proton translocation (for every two electrons transferred, four hydrogen ions are translocated across the cytoplasmic membrane), and thus conserves the redox energy in a proton gradient. This subunit may bind ubiquinone. The sequence is that of NADH-quinone oxidoreductase subunit H from Carboxydothermus hydrogenoformans (strain ATCC BAA-161 / DSM 6008 / Z-2901).